The following is a 151-amino-acid chain: UPF0208 membrane protein Spro_3315 (151 aa).

The next 2 membrane-spanning stretches (helical) occupy residues 46-64 (FAVR…WQIA) and 70-90 (GPAI…LWWL).

This sequence belongs to the UPF0208 family.

Its subcellular location is the cell inner membrane. The protein is UPF0208 membrane protein Spro_3315 of Serratia proteamaculans (strain 568).